The sequence spans 273 residues: Nitrogenase iron protein (273 aa).

Position 8 to 15 (8 to 15 (GKGGIGKS)) interacts with ATP. [4Fe-4S] cluster is bound at residue Cys-95. Arg-98 is modified (ADP-ribosylarginine; by dinitrogenase reductase ADP-ribosyltransferase). Cys-130 is a binding site for [4Fe-4S] cluster.

Belongs to the NifH/BchL/ChlL family. As to quaternary structure, homodimer. Requires [4Fe-4S] cluster as cofactor. Post-translationally, the reversible ADP-ribosylation of Arg-98 inactivates the nitrogenase reductase and regulates nitrogenase activity.

It catalyses the reaction N2 + 8 reduced [2Fe-2S]-[ferredoxin] + 16 ATP + 16 H2O = H2 + 8 oxidized [2Fe-2S]-[ferredoxin] + 2 NH4(+) + 16 ADP + 16 phosphate + 6 H(+). In terms of biological role, the key enzymatic reactions in nitrogen fixation are catalyzed by the nitrogenase complex, which has 2 components: the iron protein and the molybdenum-iron protein. This Methanosarcina mazei (strain ATCC BAA-159 / DSM 3647 / Goe1 / Go1 / JCM 11833 / OCM 88) (Methanosarcina frisia) protein is Nitrogenase iron protein.